Consider the following 519-residue polypeptide: Glutamate--cysteine ligase (519 aa).

This sequence belongs to the glutamate--cysteine ligase type 1 family. Type 1 subfamily.

The enzyme catalyses L-cysteine + L-glutamate + ATP = gamma-L-glutamyl-L-cysteine + ADP + phosphate + H(+). It participates in sulfur metabolism; glutathione biosynthesis; glutathione from L-cysteine and L-glutamate: step 1/2. This Yersinia enterocolitica serotype O:8 / biotype 1B (strain NCTC 13174 / 8081) protein is Glutamate--cysteine ligase.